Consider the following 341-residue polypeptide: Heme A synthase (341 aa).

Helical transmembrane passes span 7-27 (VTVW…IGGI), 92-112 (LFGR…AITK), 118-138 (MVAK…MGWF), 159-179 (LFLT…CAGV), 190-210 (FFTA…GALV), 253-273 (FLHR…PFWL), 280-300 (LFLA…VSVV), and 302-322 (IFLA…GVHM). A heme-binding site is contributed by histidine 255. Residue histidine 308 participates in heme binding.

This sequence belongs to the COX15/CtaA family. Type 2 subfamily. Interacts with CtaB. Requires heme b as cofactor.

The protein localises to the cell membrane. The catalysed reaction is Fe(II)-heme o + 2 A + H2O = Fe(II)-heme a + 2 AH2. Its pathway is porphyrin-containing compound metabolism; heme A biosynthesis; heme A from heme O: step 1/1. Its function is as follows. Catalyzes the conversion of heme O to heme A by two successive hydroxylations of the methyl group at C8. The first hydroxylation forms heme I, the second hydroxylation results in an unstable dihydroxymethyl group, which spontaneously dehydrates, resulting in the formyl group of heme A. In Anaplasma marginale (strain St. Maries), this protein is Heme A synthase.